The following is a 406-amino-acid chain: Putative gustatory receptor 59f (406 aa).

Topologically, residues 1-36 (MRSSATKGAKLKNSPRERLSSFNPQYAERYKELYRT) are cytoplasmic. A helical membrane pass occupies residues 37–57 (LFWLLLISVLANTAPITILPG). The Extracellular segment spans residues 58-69 (CPNRFYRLVHLS). A helical membrane pass occupies residues 70-90 (WMILWYGLFVLGSYWEFVLVT). Over 91–99 (TQRVSLDRY) the chain is Cytoplasmic. Residues 100 to 120 (LNAIESAIYVVHIFSIMLLTW) traverse the membrane as a helical segment. Topologically, residues 121-154 (QCRNWAPKLMTNIVTSDLNRAYTIDCNRTKRFIR) are extracellular. N-linked (GlcNAc...) asparagine glycosylation is present at Asn147. Residues 155 to 175 (LQLFLVGIFACLAIFFNIWTH) traverse the membrane as a helical segment. Topologically, residues 176-189 (KFVVYRSILSINSY) are cytoplasmic. Residues 190 to 210 (VMPNIISSISFAQYYLLLQGI) form a helical membrane-spanning segment. At 211–259 (AWRQRRLTEGLERELTHLHSPRISEVQKIRMHHANLIDFTKAVNRTFQY) the chain is on the extracellular side. Residue Asn254 is glycosylated (N-linked (GlcNAc...) asparagine). A helical transmembrane segment spans residues 260-280 (SILLLFVGCFLNFNLVLFLVY). Residues 281–364 (QGIENPSMAD…RQHVVCGVIN (84 aa)) lie on the Cytoplasmic side of the membrane. A helical transmembrane segment spans residues 365–385 (LDLKFLTTLLVASADFFIFLL). The Extracellular portion of the chain corresponds to 386 to 406 (QYDVTYEALSKSVQGNVTRYK). Asn401 carries N-linked (GlcNAc...) asparagine glycosylation.

It belongs to the insect chemoreceptor superfamily. Gustatory receptor (GR) family. Gr10a subfamily. As to expression, expressed in the adult abdomen and wing. In larvae, is expressed in neurons of the terminal external chemosensory organ.

The protein resides in the cell membrane. In terms of biological role, probable gustatory receptor which mediates acceptance or avoidance behavior, depending on its substrates. In Drosophila melanogaster (Fruit fly), this protein is Putative gustatory receptor 59f (Gr59f).